We begin with the raw amino-acid sequence, 109 residues long: uncharacterized protein (109 aa).

It belongs to the archaeal ATPase family.

This is an uncharacterized protein from Methanocaldococcus jannaschii (strain ATCC 43067 / DSM 2661 / JAL-1 / JCM 10045 / NBRC 100440) (Methanococcus jannaschii).